Consider the following 239-residue polypeptide: tRNA (guanine-N(1)-)-methyltransferase (239 aa).

S-adenosyl-L-methionine contacts are provided by residues Gly-110 and 130 to 135 (VGDYVL).

Belongs to the RNA methyltransferase TrmD family. As to quaternary structure, homodimer.

The protein resides in the cytoplasm. The catalysed reaction is guanosine(37) in tRNA + S-adenosyl-L-methionine = N(1)-methylguanosine(37) in tRNA + S-adenosyl-L-homocysteine + H(+). In terms of biological role, specifically methylates guanosine-37 in various tRNAs. This is tRNA (guanine-N(1)-)-methyltransferase from Borrelia turicatae (strain 91E135).